The following is a 118-amino-acid chain: Small ribosomal subunit protein uS10 (118 aa).

A Phosphoserine modification is found at serine 37.

The protein belongs to the universal ribosomal protein uS10 family. Component of the small ribosomal subunit (SSU). Mature yeast ribosomes consist of a small (40S) and a large (60S) subunit. The 40S small subunit contains 1 molecule of ribosomal RNA (18S rRNA) and at least 33 different proteins. The large 60S subunit contains 3 rRNA molecules (25S, 5.8S and 5S rRNA) and at least 46 different proteins.

It localises to the cytoplasm. Functionally, component of the ribosome, a large ribonucleoprotein complex responsible for the synthesis of proteins in the cell. The small ribosomal subunit (SSU) binds messenger RNAs (mRNAs) and translates the encoded message by selecting cognate aminoacyl-transfer RNA (tRNA) molecules. The large subunit (LSU) contains the ribosomal catalytic site termed the peptidyl transferase center (PTC), which catalyzes the formation of peptide bonds, thereby polymerizing the amino acids delivered by tRNAs into a polypeptide chain. The nascent polypeptides leave the ribosome through a tunnel in the LSU and interact with protein factors that function in enzymatic processing, targeting, and the membrane insertion of nascent chains at the exit of the ribosomal tunnel. In Schizosaccharomyces pombe (strain 972 / ATCC 24843) (Fission yeast), this protein is Small ribosomal subunit protein uS10 (rps20).